The chain runs to 440 residues: MSFELHSLWQERHDDEHKIRRDDHRSPYQRDRARILHSAAFRRLQAKTQVHGNSLEDFHRSRLTHSLEAAQLGTGIVAQLKKKQSEFKELLPSDSLIDSLCLAHDIGHPPYGHGGEVALNYMMRDHGGFEGNAQTFRIVTKLEPYTEHFGMNLSRRTLLGLIKYPALISQTRSVKLPNPAEHQRRLKAKEWSPAKGIYDCDKDLFDWVIAPLSENDKSLLSQMRYRPDSDLEHSKTRFKSLDCSIMELADDIAYGVHDLEDAIVLGMVTRQQWQEGAASQLADCGDPWFEEHIGSIGQMLFSGKHHQRKDAIGGMVNALLTSISIKVVDEPFQNPLLAWNACLEPHMAKALDVLKHFVSQYVIQVPQVQIVEYKGQQIIMDIFEALSADPERLLPIHTKELWQSATSDSGKMRVIADYISAMTDGHAQKLHRQLFSSIVL.

An HD domain is found at 62–255; it reads RLTHSLEAAQ…MELADDIAYG (194 aa).

The protein belongs to the dGTPase family. Type 2 subfamily.

The protein is Deoxyguanosinetriphosphate triphosphohydrolase-like protein of Vibrio parahaemolyticus serotype O3:K6 (strain RIMD 2210633).